The chain runs to 130 residues: DNA-directed RNA polymerase subunit omega (130 aa).

The segment at 109–130 (EEELLKGLEGLAPPEEQPEEDE) is disordered.

This sequence belongs to the RNA polymerase subunit omega family. The RNAP catalytic core consists of 2 alpha, 1 beta, 1 beta' and 1 omega subunit. When a sigma factor is associated with the core the holoenzyme is formed, which can initiate transcription.

It catalyses the reaction RNA(n) + a ribonucleoside 5'-triphosphate = RNA(n+1) + diphosphate. Functionally, promotes RNA polymerase assembly. Latches the N- and C-terminal regions of the beta' subunit thereby facilitating its interaction with the beta and alpha subunits. This is DNA-directed RNA polymerase subunit omega from Rhodopseudomonas palustris (strain BisB5).